The chain runs to 371 residues: MAISKITLAIIVLLLGFTEKLSALSSSCNFPAVFNFGDSNSDTGAISAAIGEVPPPNGVAFFGRSAGRHSDGRLIIDFITENLTLPYLTPYLDSVGANYRHGANFATGGSCIRPTLACFSPFHLGTQVSQFIHFKTRTLSLYNQTNGKFNRLSHTNYFSKALYTLDIGQNDLAIGFQNMTEEQLKATIPLIIENFTIALKLLYKEGARFFSIHNTGPTGCLPYLLKAFPAIPRDPYGCLKPLNNVAIEFNKQLKNKITQLKKELPSSFFTYVDVYSAKYNLITKAKALGFIDPFDYCCVGAIGRGMGCGKTIFLNGTELYSSSCQNRKNFISWDGIHYTETANMLVANRILDGSISDPPLPTQKACKLTKK.

Positions 1–23 (MAISKITLAIIVLLLGFTEKLSA) are cleaved as a signal peptide. Serine 39 acts as the Nucleophile in catalysis. Asparagine 82, asparagine 143, asparagine 178, asparagine 194, and asparagine 315 each carry an N-linked (GlcNAc...) asparagine glycan. Residues aspartate 334 and histidine 337 contribute to the active site.

Belongs to the 'GDSL' lipolytic enzyme family.

The protein resides in the secreted. The polypeptide is GDSL esterase/lipase At3g27950 (Arabidopsis thaliana (Mouse-ear cress)).